We begin with the raw amino-acid sequence, 198 residues long: Nucleoid occlusion factor SlmA (198 aa).

In terms of domain architecture, HTH tetR-type spans 10-70; that stretch reads NRREEILQSL…SLIEFIEDSL (61 aa). Residues 33–52 constitute a DNA-binding region (H-T-H motif); it reads TTAKLAASVGVSEAALYRHF. A coiled-coil region spans residues 117-144; that stretch reads EQDRLQGRINQLFERIEAQLRQVLREKR.

Belongs to the nucleoid occlusion factor SlmA family. As to quaternary structure, homodimer. Interacts with FtsZ.

It is found in the cytoplasm. It localises to the nucleoid. Its function is as follows. Required for nucleoid occlusion (NO) phenomenon, which prevents Z-ring formation and cell division over the nucleoid. Acts as a DNA-associated cell division inhibitor that binds simultaneously chromosomal DNA and FtsZ, and disrupts the assembly of FtsZ polymers. SlmA-DNA-binding sequences (SBS) are dispersed on non-Ter regions of the chromosome, preventing FtsZ polymerization at these regions. The protein is Nucleoid occlusion factor SlmA of Salmonella paratyphi A (strain ATCC 9150 / SARB42).